Consider the following 150-residue polypeptide: UPF0756 membrane protein HDEF_0364 (150 aa).

5 helical membrane passes run 1 to 21, 28 to 48, 51 to 71, 88 to 108, and 123 to 143; these read MMFF…GLIS, ISVV…FPWV, YALK…IASG, ILGI…VSLM, and ILGV…AGLL.

It belongs to the UPF0756 family.

Its subcellular location is the cell membrane. This chain is UPF0756 membrane protein HDEF_0364, found in Hamiltonella defensa subsp. Acyrthosiphon pisum (strain 5AT).